The following is a 345-amino-acid chain: Ferritin-like-encapsulin shell fusion protein (345 aa).

Residues 1–109 (MLSINPTLIN…INDNKKEESN (109 aa)) form a ferritin-like domain region. Fe cation contacts are provided by E31, E61, and H64. Residues 110–345 (VEYFEKLRSA…KNPEAIVVLE (236 aa)) form an encapsulin domain region.

It in the N-terminal section; belongs to the ferritin-like superfamily. This sequence in the C-terminal section; belongs to the encapsulin family. Family 1 subfamily. 180 monomers assemble into 12 pentamers and 20 hexamers which further assemble into an icosahedral particle about 36.6 nm in diameter. The N-terminal domain (residues 1-99) crystallizes as 3 decamers.

It is found in the encapsulin nanocompartment. It carries out the reaction 4 Fe(2+) + O2 + 4 H(+) = 4 Fe(3+) + 2 H2O. Its activity is regulated as follows. The ferroxidase activity is inhibited by zinc. Its function is as follows. Fusion of the shell and cargo protein of a type 1 encapsulin nanocompartment. The nanocompartment is probably involved in iron storage. Expression in E.coli generates spherical particles (PfSPs) about 30 nm in diameter. The purified N-terminus has ferroxidase activity. The protein is Ferritin-like-encapsulin shell fusion protein of Pyrococcus furiosus (strain ATCC 43587 / DSM 3638 / JCM 8422 / Vc1).